Here is a 1221-residue protein sequence, read N- to C-terminus: Coatomer subunit alpha (1221 aa).

9 WD repeats span residues 7–46 (TKAS…LLEK), 49–88 (EHEG…CLFT), 91–130 (GHKD…CIAE), 133–172 (GHNH…KKMT), 202–241 (GHDR…VDTF), 243–282 (GHYN…TVHM), 285–323 (RDHD…PLFV), 358–399 (PSNN…SNTV), and 528–567 (WDDN…TGVK). The tract at residues 820 to 885 (GVEQSTSTPT…DDGGWERDDL (66 aa)) is disordered. Residues 844 to 857 (SQQQSSQQQQQQQQ) show a composition bias toward low complexity. The stretch at 910-953 (PQPGPSFSMIWARNSQFAVDHIAAGSFESAMNILNSQIGAVNFD) is one WD 10 repeat.

Oligomeric complex that consists of at least the alpha, beta, beta', gamma, delta, epsilon and zeta subunits.

The protein localises to the cytoplasm. It is found in the golgi apparatus membrane. Functionally, the coatomer is a cytosolic protein complex that binds to dilysine motifs and reversibly associates with Golgi non-clathrin-coated vesicles, which further mediate biosynthetic protein transport from the ER, via the Golgi up to the trans Golgi network. Coatomer complex is required for budding from Golgi membranes, and is essential for the retrograde Golgi-to-ER transport of dilysine-tagged proteins. This is Coatomer subunit alpha (copa) from Dictyostelium discoideum (Social amoeba).